A 195-amino-acid chain; its full sequence is dTTP/UTP pyrophosphatase (195 aa).

D70 acts as the Proton acceptor in catalysis.

The protein belongs to the Maf family. YhdE subfamily. It depends on a divalent metal cation as a cofactor.

It is found in the cytoplasm. It catalyses the reaction dTTP + H2O = dTMP + diphosphate + H(+). It carries out the reaction UTP + H2O = UMP + diphosphate + H(+). In terms of biological role, nucleoside triphosphate pyrophosphatase that hydrolyzes dTTP and UTP. May have a dual role in cell division arrest and in preventing the incorporation of modified nucleotides into cellular nucleic acids. In Methanococcoides burtonii (strain DSM 6242 / NBRC 107633 / OCM 468 / ACE-M), this protein is dTTP/UTP pyrophosphatase.